The chain runs to 511 residues: Inactive cytochrome P450 monooxygenase cloA (511 aa).

Residues 17–37 (ILLTAGLCVPCALVIHGIYNL) traverse the membrane as a helical segment. N-linked (GlcNAc...) asparagine glycosylation is found at Asn81 and Asn344. Cys450 lines the heme pocket.

Belongs to the cytochrome P450 family. It depends on heme as a cofactor.

The protein resides in the membrane. Its function is as follows. Inactive cytochrome P450 monooxygenase; part of the gene cluster that mediates the biosynthesis of fungal ergot alkaloid. DmaW catalyzes the first step of ergot alkaloid biosynthesis by condensing dimethylallyl diphosphate (DMAP) and tryptophan to form 4-dimethylallyl-L-tryptophan. The second step is catalyzed by the methyltransferase easF that methylates 4-dimethylallyl-L-tryptophan in the presence of S-adenosyl-L-methionine, resulting in the formation of 4-dimethylallyl-L-abrine. The catalase easC and the FAD-dependent oxidoreductase easE then transform 4-dimethylallyl-L-abrine to chanoclavine-I which is further oxidized by easD in the presence of NAD(+), resulting in the formation of chanoclavine-I aldehyde. Agroclavine dehydrogenase easG then mediates the conversion of chanoclavine-I aldehyde to agroclavine via a non-enzymatic adduct reaction: the substrate is an iminium intermediate that is formed spontaneously from chanoclavine-I aldehyde in the presence of glutathione. Further conversion of agroclavine to paspalic acid is a two-step process involving oxidation of agroclavine to elymoclavine and of elymoclavine to paspalic acid, the second step being performed by the elymoclavine oxidase cloA. However, cloA does not encode a functional enzyme indicating that C.fusiformis terminates its ergot alkaloid pathway at elymoclavine. This Claviceps fusiformis (Ergot fungus) protein is Inactive cytochrome P450 monooxygenase cloA.